The chain runs to 371 residues: Gustatory receptor-like 65a (371 aa).

The Cytoplasmic segment spans residues 1 to 13; the sequence is MREVNLLNRFTRQ. The chain crosses the membrane as a helical span at residues 14–34; sequence FLFLIVLVTQICGVATFVYNS. The Extracellular segment spans residues 35–42; that stretch reads KAQCFRQS. A helical transmembrane segment spans residues 43–63; that stretch reads GFLRFYSSLVLIFLALFLIVT. Topologically, residues 64 to 72 are cytoplasmic; sequence TSKMFHNLQ. The chain crosses the membrane as a helical span at residues 73-93; the sequence is AVWPYVVGSVIILVVRIHGLL. At 94–126 the chain is on the extracellular side; it reads ESAEIVELLNQMLRIMRQVNLMARHPNLFRLKH. Residues 127-147 traverse the membrane as a helical segment; it reads LLLLLLALQNLLRSLNTIVGI. The Cytoplasmic portion of the chain corresponds to 148 to 161; it reads SNHSAEAYDSFLNS. The helical transmembrane segment at 162–182 threads the bilayer; it reads VILLIILAVLLSFLLQITINI. Residues 183–251 lie on the Extracellular side of the membrane; it reads CLFVVLIATY…FHITVRIIRH (69 aa). A helical membrane pass occupies residues 252-272; it reads FRFHWLCAIIYGLLPFFSLTA. Residues 273 to 277 lie on the Cytoplasmic side of the membrane; the sequence is KDQNG. The chain crosses the membrane as a helical span at residues 278–298; sequence FNFLIISALNIIFQWTIFAIL. The Extracellular portion of the chain corresponds to 299–371; the sequence is SRESRITRSL…FVNRLEYLHI (73 aa).

The protein localises to the cell membrane. This is Gustatory receptor-like 65a from Drosophila melanogaster (Fruit fly).